Reading from the N-terminus, the 272-residue chain is Hydroxyethylthiazole kinase (272 aa).

Met46 is a binding site for substrate. ATP is bound by residues Arg122 and Thr168. Gly195 contacts substrate.

This sequence belongs to the Thz kinase family. Requires Mg(2+) as cofactor.

The catalysed reaction is 5-(2-hydroxyethyl)-4-methylthiazole + ATP = 4-methyl-5-(2-phosphooxyethyl)-thiazole + ADP + H(+). It functions in the pathway cofactor biosynthesis; thiamine diphosphate biosynthesis; 4-methyl-5-(2-phosphoethyl)-thiazole from 5-(2-hydroxyethyl)-4-methylthiazole: step 1/1. Catalyzes the phosphorylation of the hydroxyl group of 4-methyl-5-beta-hydroxyethylthiazole (THZ). In Alkaliphilus metalliredigens (strain QYMF), this protein is Hydroxyethylthiazole kinase.